The following is a 141-amino-acid chain: ATP synthase epsilon chain, chloroplastic (141 aa).

The protein belongs to the ATPase epsilon chain family. F-type ATPases have 2 components, F(1) - the catalytic core - and F(0) - the membrane proton channel. F(1) has five subunits: alpha(3), beta(3), gamma(1), delta(1), epsilon(1). F(0) has four main subunits: a(1), b(1), b'(1) and c(10-14). The alpha and beta chains form an alternating ring which encloses part of the gamma chain. F(1) is attached to F(0) by a central stalk formed by the gamma and epsilon chains, while a peripheral stalk is formed by the delta, b and b' chains.

The protein localises to the plastid. The protein resides in the chloroplast thylakoid membrane. Its function is as follows. F(1)F(0) ATP synthase produces ATP from ADP in the presence of a proton or sodium gradient. F-type ATPases consist of two structural domains, F(1) containing the extramembraneous catalytic core and F(0) containing the membrane proton channel, linked together by a central stalk and a peripheral stalk. During catalysis, ATP synthesis in the catalytic domain of F(1) is coupled via a rotary mechanism of the central stalk subunits to proton translocation. The sequence is that of ATP synthase epsilon chain, chloroplastic from Chlamydomonas reinhardtii (Chlamydomonas smithii).